The primary structure comprises 103 residues: Small ribosomal subunit protein uS10 (103 aa).

The protein belongs to the universal ribosomal protein uS10 family. As to quaternary structure, part of the 30S ribosomal subunit.

In terms of biological role, involved in the binding of tRNA to the ribosomes. This is Small ribosomal subunit protein uS10 from Acetivibrio thermocellus (strain ATCC 27405 / DSM 1237 / JCM 9322 / NBRC 103400 / NCIMB 10682 / NRRL B-4536 / VPI 7372) (Clostridium thermocellum).